A 705-amino-acid polypeptide reads, in one-letter code: Probable cyclic nucleotide-gated ion channel 16 (705 aa).

Over 1–57 (MSNLHLYTSARFRNFPTTFSLRHHHNDPNNQRRRSIFSKLRDKTLDPGGDLITRWNH) the chain is Cytoplasmic. A helical transmembrane segment spans residues 58–78 (IFLITCLLALFLDPLYFYLPI). Residues 79–91 (VQAGTACMSIDVR) lie on the Extracellular side of the membrane. A helical membrane pass occupies residues 92–112 (FGIFVTCFRNLADLSFLIHIL). At 113 to 147 (LKFKTAFVSKSSRVFGRGELVMDRREIAIRYLKSE) the chain is on the cytoplasmic side. A helical membrane pass occupies residues 148–168 (FVIDLAATLPLPQIMIWFVIP). The Extracellular segment spans residues 169–180 (NAGEFRYAAHQN). Residues 181–201 (HTLSLIVLIQYVPRFLVMLPL) traverse the membrane as a helical segment. The Cytoplasmic portion of the chain corresponds to 202–222 (NRRIIKATGVAAKTAWSGAAY). Residues 223-243 (NLILYLLVSHVLGSVWYVLSI) form a helical membrane-spanning segment. Residues 244–353 (QRQHECWRRE…LAASTLSSET (110 aa)) are Extracellular-facing. A helical membrane pass occupies residues 354–374 (IFSCFICVAGLVFFSHLIGNV). The Cytoplasmic segment spans residues 375-705 (QNYLQSTTAR…MFKPEDPGFF (331 aa)). Residues 457 to 580 (FFAQ…HSKK) and Glu528 contribute to the a nucleoside 3',5'-cyclic phosphate site. The segment at 573-588 (FRRLHSKKLQHAFRYY) is calmodulin-binding. One can recognise an IQ domain in the interval 593-622 (RAWGTCFIQAAWRRYMKRKLAMELARQEEE). Disordered stretches follow at residues 636–655 (EEDM…SNNQ) and 672–705 (RGVL…PGFF). Residues 642 to 655 (SNNNNGDENSSNNQ) are compositionally biased toward low complexity.

This sequence belongs to the cyclic nucleotide-gated cation channel (TC 1.A.1.5) family. In terms of assembly, homotetramer or heterotetramer.

It is found in the cell membrane. Functionally, putative cyclic nucleotide-gated ion channel. In Arabidopsis thaliana (Mouse-ear cress), this protein is Probable cyclic nucleotide-gated ion channel 16 (CNGC16).